The chain runs to 436 residues: Transcription factor MYB124 (436 aa).

Positions 1 to 11 (MEDTKKKKKKN) are enriched in basic residues. The interval 1 to 23 (MEDTKKKKKKNINNNQDSKKKER) is disordered. The short motif at 8–15 (KKKNINNN) is the Nuclear localization signal 1 element. 2 consecutive HTH myb-type domains span residues 20-71 (KKER…YTYL) and 72-126 (NSDF…KKRA). 2 DNA-binding regions (H-T-H motif) span residues 48–71 (WAII…YTYL) and 99–122 (WTEI…TTLC). Residues 151–158 (PRKSENET) carry the Nuclear localization signal 2 motif. Residues 309–328 (SWRQPDLHDSPASSEYSSGS) are disordered. Residues 319–328 (PASSEYSSGS) are compositionally biased toward polar residues.

In terms of assembly, interacts with RBR1. In terms of tissue distribution, expressed in all shoot organs with higher levels in leaves, stems, flowers, siliques and floral buds. Also detected in roots tips.

It localises to the nucleus. Functionally, transcription factor that binds to DNA in promoters cis-regulatory element 5'-GGCGCGC-3' of cell cycle genes, including cyclins, cyclin-dependent kinases (CDKs), and components of the pre-replication complex. Binds to DNA in promoters cis-regulatory element 5'-AGCCG-3' of auxin regulated genes (e.g. PIN3 and PIN7). Together with FAMA and MYB88, ensures that stomata contain just two guard cells (GCs) by enforcing a single symmetric precursor cell division before stomatal maturity. Represses the expression of the mitosis-inducing factors CDKB1-1 and CDKA-1, specifically required for the last guard mother cells (GMC) symmetric divisions in the stomatal pathway. Represses CYCA2-3 in newly formed guard cells. Together with MYB88, regulates stomata spacing by restricting divisions late in the stomatal cell lineage thus limiting the number of GMC divisions. In collaboration with CDKB1-1 and CDKB1-2, restrict the G1/S transition and chloroplast and nuclear number during stomatal formation, and normally maintain fate and developmental progression throughout the stomatal cell lineage. Also involved in the shape regulation of pavement cells. Involved in sensing and/or transducing abiotic stress (e.g. drought and salt), probably via the positive regulation of NAC019. Regulates female reproduction being required for entry into megasporogenesis, probably via the regulation of cell cycle genes. Promotes histone H3K27me3 marks and represses stem cell gene expression. Required for lateral roots (LRs) initiation via the regulation of PIN3 expression in an auxin-dependent manner. Involved in responses to gravity stimulation in primary roots by regulating the transcription of PIN3 and PIN7 in gravity-sensing cells, thus modulating auxin asymmetric redistribution. This is Transcription factor MYB124 from Arabidopsis thaliana (Mouse-ear cress).